The primary structure comprises 282 residues: Formamidopyrimidine-DNA glycosylase (282 aa).

Residue Pro-2 is the Schiff-base intermediate with DNA of the active site. Glu-3 functions as the Proton donor in the catalytic mechanism. Lys-60 functions as the Proton donor; for beta-elimination activity in the catalytic mechanism. 3 residues coordinate DNA: His-99, Arg-118, and Arg-163. The segment at 248-282 (WVYGRTGEPCRVCGTSIERLKLGGRSAHFCPRCQA) adopts an FPG-type zinc-finger fold. The active-site Proton donor; for delta-elimination activity is Arg-272.

Belongs to the FPG family. As to quaternary structure, monomer. Zn(2+) is required as a cofactor.

The enzyme catalyses Hydrolysis of DNA containing ring-opened 7-methylguanine residues, releasing 2,6-diamino-4-hydroxy-5-(N-methyl)formamidopyrimidine.. It carries out the reaction 2'-deoxyribonucleotide-(2'-deoxyribose 5'-phosphate)-2'-deoxyribonucleotide-DNA = a 3'-end 2'-deoxyribonucleotide-(2,3-dehydro-2,3-deoxyribose 5'-phosphate)-DNA + a 5'-end 5'-phospho-2'-deoxyribonucleoside-DNA + H(+). Its function is as follows. Involved in base excision repair of DNA damaged by oxidation or by mutagenic agents. Acts as a DNA glycosylase that recognizes and removes damaged bases. Has a preference for oxidized purines, such as 7,8-dihydro-8-oxoguanine (8-oxoG). Has AP (apurinic/apyrimidinic) lyase activity and introduces nicks in the DNA strand. Cleaves the DNA backbone by beta-delta elimination to generate a single-strand break at the site of the removed base with both 3'- and 5'-phosphates. This Rippkaea orientalis (strain PCC 8801 / RF-1) (Cyanothece sp. (strain PCC 8801)) protein is Formamidopyrimidine-DNA glycosylase.